We begin with the raw amino-acid sequence, 776 residues long: Transferrin receptor protein 1 (776 aa).

At 1–70 the chain is on the cytoplasmic side; it reads MDHARAALSN…QPQRNGKRLC (70 aa). The Endocytosis signal signature appears at 19–22; the sequence is YTRF. At serine 23 the chain carries Phosphoserine. Cysteine 70 carries S-palmitoyl cysteine lipidation. Residues 71–91 traverse the membrane as a helical; Signal-anchor for type II membrane protein segment; sequence FLVIAAVLLLLIGFLIGYLSY. Residues 92-776 lie on the Extracellular side of the membrane; it reads RGRIELAARC…GDIWETDNEF (685 aa). A PA domain is found at 230–322; sequence SESGSVSGKP…GTGDPYTPGF (93 aa). Asparagine 261, asparagine 326, and asparagine 391 each carry an N-linked (GlcNAc...) asparagine glycan. Positions 586–776 are ligand-binding; that stretch reads KGDTLENLRK…GDIWETDNEF (191 aa). The Cell attachment site motif lies at 662–664; it reads RGD. Residue asparagine 738 is glycosylated (N-linked (GlcNAc...) asparagine).

Belongs to the peptidase M28 family. M28B subfamily. As to quaternary structure, homodimer; disulfide-linked. Binds one transferrin molecule per subunit. Stearoylated. Stearoylation does not affect iron uptake. Post-translationally, N- and O-glycosylated, phosphorylated and palmitoylated.

Its subcellular location is the cell membrane. The protein localises to the melanosome. Its function is as follows. Cellular uptake of iron occurs via receptor-mediated endocytosis of ligand-occupied transferrin receptor into specialized endosomes. Endosomal acidification leads to iron release. The apotransferrin-receptor complex is then recycled to the cell surface with a return to neutral pH and the concomitant loss of affinity of apotransferrin for its receptor. Transferrin receptor is necessary for development of erythrocytes and the nervous system. Acts as a lipid sensor that regulates mitochondrial fusion by regulating activation of the JNK pathway. When dietary levels of stearate (C18:0) are low, promotes activation of the JNK pathway, resulting in HUWE1-mediated ubiquitination and subsequent degradation of the mitofusin MFN2 and inhibition of mitochondrial fusion. When dietary levels of stearate (C18:0) are high, TFRC stearoylation inhibits activation of the JNK pathway and thus degradation of the mitofusin MFN2. Mediates uptake of NICOL1 into fibroblasts where it may regulate extracellular matrix production. The chain is Transferrin receptor protein 1 (TFRC) from Gallus gallus (Chicken).